The sequence spans 228 residues: Methyltransferase verB (228 aa).

This sequence belongs to the methyltransferase superfamily.

It functions in the pathway secondary metabolite biosynthesis; terpenoid biosynthesis. The protein operates within mycotoxin biosynthesis. In terms of biological role, methyltransferase; part of the gene cluster that mediates the biosynthesis of the neurotoxin verrucosidin, a methylated alpha-pyrone polyketide that inhibits oxidative phosphorylation in mitochondria and thereby causes neurological diseases. The carbon backbone of verrucosidin is synthesized by the HR-PKS verA, and further modified by the other verrucodidin cluster enzymes. The chain is Methyltransferase verB from Penicillium polonicum.